Reading from the N-terminus, the 181-residue chain is MAENQNNLIWIDLEMTGLDPERDRIIEIATLVTDANLNILAEGPVLAVHQSDEQLGLMDEWNVRTHTGSGLVERVKASPFNDHDAELQTIEFLKQWVPAGTSPICGNSVGQDRRFLFRYMPELEAYFHYRYLDVSTLKELARRWKPEILAGFKKQNTHQALDDIRESVAELAYYREHFIQK.

The region spanning 8-171 (LIWIDLEMTG…DDIRESVAEL (164 aa)) is the Exonuclease domain. Tyr129 is an active-site residue.

The protein belongs to the oligoribonuclease family.

It localises to the cytoplasm. In terms of biological role, 3'-to-5' exoribonuclease specific for small oligoribonucleotides. In Yersinia enterocolitica serotype O:8 / biotype 1B (strain NCTC 13174 / 8081), this protein is Oligoribonuclease.